Consider the following 252-residue polypeptide: Glucosamine-6-phosphate deaminase (252 aa).

D67 acts as the Proton acceptor; for enolization step in catalysis. N137 acts as the For ring-opening step in catalysis. The Proton acceptor; for ring-opening step role is filled by H139. The For ring-opening step role is filled by E144.

This sequence belongs to the glucosamine/galactosamine-6-phosphate isomerase family. NagB subfamily.

The enzyme catalyses alpha-D-glucosamine 6-phosphate + H2O = beta-D-fructose 6-phosphate + NH4(+). The protein operates within amino-sugar metabolism; N-acetylneuraminate degradation; D-fructose 6-phosphate from N-acetylneuraminate: step 5/5. Catalyzes the reversible isomerization-deamination of glucosamine 6-phosphate (GlcN6P) to form fructose 6-phosphate (Fru6P) and ammonium ion. This is Glucosamine-6-phosphate deaminase from Staphylococcus aureus (strain Mu3 / ATCC 700698).